The following is a 232-amino-acid chain: Recombination protein RecR (232 aa).

The C4-type zinc finger occupies 92–107 (CQVCFHLSAEPVCDIC). Residues 115–209 (SVICVVSDPR…KVTRIAFGLP (95 aa)) enclose the Toprim domain.

The protein belongs to the RecR family.

Its function is as follows. May play a role in DNA repair. It seems to be involved in an RecBC-independent recombinational process of DNA repair. It may act with RecF and RecO. The chain is Recombination protein RecR from Synechocystis sp. (strain ATCC 27184 / PCC 6803 / Kazusa).